A 707-amino-acid polypeptide reads, in one-letter code: Mitochondrial disaggregase (707 aa).

Residues M1–N36 constitute a mitochondrion transit peptide. The autoinhibitory stretch occupies residues P92–C126. 4 ANK repeats span residues N133 to A162, L166 to L195, K265 to R295, and M298 to R327. ATP contacts are provided by H346, I348, S383, G384, I385, G386, K387, T388, E455, and N496. The tract at residues L507–T535 is regulatory; slows ATPase and disaggregase activities. R561 serves as a coordination point for ATP. At K589 the chain carries N6-acetyllysine. R620 contacts ATP.

It belongs to the ClpA/ClpB family. Homododecamer when substrate-bound; the homododecamer consists of 2 homohexamers stacked head-to-head via ANK repeat-mediated interactions. The active substrate-bound form is likely to exist in a dynamic equilibrium between homohexamers and homododecamers. Homotetradecamer in the unbound state which is remodeled upon substrate binding into the homododecamer. Interacts with PHB and PHB2. Interacts with MAVS; the interaction is enhanced by Sendai virus infection. Proteolytically cleaved by protease PARL. ATP-dependent protein disaggregase activity is stimulated by PARL-mediated cleavage of the N-terminal autoinhibitory peptide. In terms of tissue distribution, widely expressed (at protein level). Expressed in fetal, as well as in adult tissues, with highest levels in adult brain, including thalamus, hippocampus, occipital cortex and parietal cortex. Low expression in granulocytes.

The protein localises to the mitochondrion intermembrane space. The enzyme catalyses ATP + H2O = ADP + phosphate + H(+). With respect to regulation, disaggregase activity is inhibited by ADP. Functions as a regulatory ATPase and participates in secretion/protein trafficking process. Has ATP-dependent protein disaggregase activity and is required to maintain the solubility of key mitochondrial proteins. Involved in mitochondrial-mediated antiviral innate immunity, activates RIG-I-mediated signal transduction and production of IFNB1 and pro-inflammatory cytokine IL6. Plays a role in granulocyte differentiation. The protein is Mitochondrial disaggregase of Homo sapiens (Human).